The sequence spans 586 residues: Heterogeneous nuclear ribonucleoprotein L (586 aa).

The span at 1–16 shows a compositional bias: basic residues; it reads MSRRLLPRAEKRRRRL. The interval 1 to 97 is disordered; it reads MSRRLLPRAE…NYDDPHKTPA (97 aa). The span at 17-27 shows a compositional bias: basic and acidic residues; it reads EQRQQPDEQLR. The span at 28-37 shows a compositional bias: low complexity; sequence RAGAMVKMAA. Residues 38–54 show a composition bias toward gly residues; sequence AGGGGGGGRYYGGGNEG. Residues Lys59 and Lys62 each participate in a glycyl lysine isopeptide (Lys-Gly) (interchain with G-Cter in SUMO2) cross-link. Positions 69 to 87 are enriched in gly residues; sequence QHGGGGGGGSGAAGGGGGE. Ser98 carries the phosphoserine modification. The 75-residue stretch at 99–173 folds into the RRM 1 domain; it reads PVVHIRGLID…HPAFVNYSTS (75 aa). Lys133 is covalently cross-linked (Glycyl lysine isopeptide (Lys-Gly) (interchain with G-Cter in SUMO2)). Ser182 is modified (phosphoserine). Residues 190 to 267 enclose the RRM 2 domain; that stretch reads SVLLFTILNP…CTLKIEYAKP (78 aa). At Lys266 the chain carries N6-acetyllysine. Over residues 281–298 the composition is skewed to polar residues; that stretch reads DYTNPNLSGQGDPGSNPN. The interval 281-376 is disordered; the sequence is DYTNPNLSGQ…PPPPDYGPHA (96 aa). Phosphoserine occurs at positions 288 and 295. Lys299 participates in a covalent cross-link: Glycyl lysine isopeptide (Lys-Gly) (interchain with G-Cter in SUMO2). Asymmetric dimethylarginine occurs at positions 351 and 355. Positions 361-372 are enriched in pro residues; sequence GHPPPPPPPPDY. Ser378 is modified (phosphoserine). 2 RRM domains span residues 379-476 and 492-580; these read PVLM…DFSE and RIQH…LCFS. At Ser541 the chain carries Phosphoserine; by CaMK4. Residue Lys565 forms a Glycyl lysine isopeptide (Lys-Gly) (interchain with G-Cter in SUMO2) linkage.

In terms of assembly, identified in a IGF2BP1-dependent mRNP granule complex containing untranslated mRNAs. Interacts with HNRNPLL. Interacts with APEX1; the interaction is DNA-dependent. Component of a complex with SETD2. Interacts with ELAVL1. Part of a transcription inhibitory ribonucleoprotein complex composed at least of the circular RNA circZNF827, ZNF827 and HNRNPK. Interacts with CHD8 in an RNA-dependent manner. In terms of processing, phosphorylation at Ser-541 by CaMK4 enhances interaction with a CaMK4-responsive RNA element (CaRRE1), and prevents inclusion of the stress axis-regulated exon (STREX) of the KCNMA1 potassium channel transcripts upon membrane depolarization. Detected in hematopoietic cells, including lymphoid progenitor cells.

It is found in the nucleus. The protein resides in the nucleoplasm. Its subcellular location is the cytoplasm. Its function is as follows. Splicing factor binding to exonic or intronic sites and acting as either an activator or repressor of exon inclusion. Exhibits a binding preference for CA-rich elements. Component of the heterogeneous nuclear ribonucleoprotein (hnRNP) complexes and associated with most nascent transcripts. Associates, together with APEX1, to the negative calcium responsive element (nCaRE) B2 of the APEX2 promoter. As part of a ribonucleoprotein complex composed at least of ZNF827, HNRNPK and the circular RNA circZNF827 that nucleates the complex on chromatin, may negatively regulate the transcription of genes involved in neuronal differentiation. Regulates alternative splicing of a core group of genes involved in neuronal differentiation, likely by mediating H3K36me3-coupled transcription elongation and co-transcriptional RNA processing via interaction with CHD8. The polypeptide is Heterogeneous nuclear ribonucleoprotein L (Hnrnpl) (Mus musculus (Mouse)).